Reading from the N-terminus, the 341-residue chain is Elongation factor Ts (341 aa).

The involved in Mg(2+) ion dislocation from EF-Tu stretch occupies residues T80–V83.

It belongs to the EF-Ts family.

The protein resides in the cytoplasm. Associates with the EF-Tu.GDP complex and induces the exchange of GDP to GTP. It remains bound to the aminoacyl-tRNA.EF-Tu.GTP complex up to the GTP hydrolysis stage on the ribosome. This is Elongation factor Ts from Lactobacillus gasseri (strain ATCC 33323 / DSM 20243 / BCRC 14619 / CIP 102991 / JCM 1131 / KCTC 3163 / NCIMB 11718 / NCTC 13722 / AM63).